The following is an 855-amino-acid chain: Inactive rhomboid protein 1 (855 aa).

Residues 1-36 are disordered; the sequence is MSEARRDSTSSLQRKKPPWLKLDIPSAAPPAAEEPS. Residues 1-411 lie on the Cytoplasmic side of the membrane; sequence MSEARRDSTS…HRPFFTYWLT (411 aa). Residues 25–36 show a composition bias toward low complexity; that stretch reads PSAAPPAAEEPS. 2 positions are modified to phosphoserine: S76 and S176. 2 positions are modified to phosphothreonine: T180 and T183. Residue S390 is modified to Phosphoserine. The helical transmembrane segment at 412–432 threads the bilayer; it reads FVHSLVTVLAVCIYGIAPVGF. Over 433 to 655 the chain is Lumenal; that stretch reads SQHETVDSVL…NPEVPDQFYR (223 aa). N-linked (GlcNAc...) asparagine glycosylation is present at N583. Residues 656-676 traverse the membrane as a helical segment; it reads LWLSLFLHAGILHCLVSICFQ. Residues 677 to 691 lie on the Cytoplasmic side of the membrane; sequence MTVLRDLEKLAGWHR. The chain crosses the membrane as a helical span at residues 692–712; that stretch reads IAIIYLLSGVTGNLASAIFLP. The Lumenal portion of the chain corresponds to 713 to 714; sequence YR. The helical transmembrane segment at 715-735 threads the bilayer; it reads AEVGPAGSQFGILACLFVELF. At 736–746 the chain is on the cytoplasmic side; that stretch reads QSWQILARPWR. Residues 747 to 767 traverse the membrane as a helical segment; the sequence is AFFKLLAVVLFLFTFGLLPWI. Residues 768-772 lie on the Lumenal side of the membrane; it reads DNFAH. A helical membrane pass occupies residues 773–793; that stretch reads ISGFISGLFLSFAFLPYISFG. Residues 794–803 are Cytoplasmic-facing; that stretch reads KFDLYRKRCQ. A helical membrane pass occupies residues 804–824; it reads IIVFQVVFLGLLAGLVVLFYF. Residues 825–855 lie on the Lumenal side of the membrane; sequence YPVRCEWCEFLTCIPFTDKFCEKYELDAQLH.

The protein belongs to the peptidase S54 family. Homodimer, or homooligomer. Interacts with TGFA and HBEGF. Interacts with EGF; may retain EGF in the endoplasmic reticulum and regulates its degradation through the endoplasmic reticulum-associated degradation (ERAD). Interacts (via cytoplasmic N-terminus) with FRMD8/iTAP; this interaction leads to mutual protein stabilization. Interacts with ADAM17/TACE.

It localises to the endoplasmic reticulum membrane. The protein localises to the golgi apparatus membrane. Regulates ADAM17 protease, a sheddase of the epidermal growth factor (EGF) receptor ligands and TNF, thereby plays a role in sleep, cell survival, proliferation, migration and inflammation. Does not exhibit any protease activity on its own. The polypeptide is Inactive rhomboid protein 1 (RHBDF1) (Plecturocebus moloch (Dusky titi monkey)).